The sequence spans 301 residues: Polyamine aminopropyltransferase (301 aa).

The 237-residue stretch at 4-240 folds into the PABS domain; it reads WHWLLEWQTP…GLWGFVYGGV (237 aa). Gln33 is an S-methyl-5'-thioadenosine binding site. Spermidine is bound by residues His64 and Glu89. S-methyl-5'-thioadenosine is bound by residues Asp109 and 141–142; that span reads DG. The active-site Proton acceptor is the Asp159.

The protein belongs to the spermidine/spermine synthase family. In terms of assembly, homodimer or homotetramer.

It is found in the cytoplasm. The enzyme catalyses S-adenosyl 3-(methylsulfanyl)propylamine + putrescine = S-methyl-5'-thioadenosine + spermidine + H(+). The protein operates within amine and polyamine biosynthesis; spermidine biosynthesis; spermidine from putrescine: step 1/1. Functionally, catalyzes the irreversible transfer of a propylamine group from the amino donor S-adenosylmethioninamine (decarboxy-AdoMet) to putrescine (1,4-diaminobutane) to yield spermidine. The polypeptide is Polyamine aminopropyltransferase (Saccharolobus islandicus (strain Y.N.15.51 / Yellowstone #2) (Sulfolobus islandicus)).